Consider the following 349-residue polypeptide: Divinyl chlorophyll a/b light-harvesting protein PcbE (349 aa).

Transmembrane regions (helical) follow at residues 27–47 (FIAA…GSTL), 65–85 (IFLA…AWTG), 88–108 (VASI…GGLL), 201–221 (VLGG…FHIA), 241–261 (AILS…AFWC), and 308–328 (LANV…WHAL).

This sequence belongs to the PsbB/PsbC family. IsiA/Pcb subfamily. As to quaternary structure, the antenna complex consists of divinyl chlorophylls (a and b) and divinyl chlorophyll a/b binding proteins and binds more divinyl chlorophyll b than does the antenna complex from high-light-adapted Prochlorococcus. Requires divinyl chlorophyll a as cofactor. The cofactor is divinyl chlorophyll b.

Its subcellular location is the cellular thylakoid membrane. In terms of biological role, the antenna complex functions as a light receptor, it captures and delivers excitation energy to photosystems II and I. The Prochlorales pcb genes are not related to higher plant LHCs. The chain is Divinyl chlorophyll a/b light-harvesting protein PcbE (pcbE) from Prochlorococcus marinus (strain NATL2A).